A 326-amino-acid chain; its full sequence is 3-methyl-2-oxobutanoate hydroxymethyltransferase 1 (326 aa).

Mg(2+)-binding residues include Asp52, Asp91, and Glu122. 3-methyl-2-oxobutanoate is bound by residues 52-53 (DS) and Asp91. Glu189 serves as the catalytic Proton acceptor.

It belongs to the PanB family. As to quaternary structure, homodecamer; pentamer of dimers. Requires Mg(2+) as cofactor.

Its subcellular location is the cytoplasm. The catalysed reaction is 3-methyl-2-oxobutanoate + (6R)-5,10-methylene-5,6,7,8-tetrahydrofolate + H2O = 2-dehydropantoate + (6S)-5,6,7,8-tetrahydrofolate. Its pathway is cofactor biosynthesis; (R)-pantothenate biosynthesis; (R)-pantoate from 3-methyl-2-oxobutanoate: step 1/2. In terms of biological role, catalyzes the reversible reaction in which hydroxymethyl group from 5,10-methylenetetrahydrofolate is transferred onto alpha-ketoisovalerate to form ketopantoate. This is 3-methyl-2-oxobutanoate hydroxymethyltransferase 1 from Bradyrhizobium diazoefficiens (strain JCM 10833 / BCRC 13528 / IAM 13628 / NBRC 14792 / USDA 110).